Consider the following 240-residue polypeptide: Purine nucleoside phosphorylase DeoD-type (240 aa).

Residue His-5 coordinates a purine D-ribonucleoside. Phosphate contacts are provided by residues Gly-21, Arg-25, Arg-44, and 88–91 (RVGS). Residues 180 to 182 (EME) and 204 to 205 (SD) each bind a purine D-ribonucleoside. The Proton donor role is filled by Asp-205.

The protein belongs to the PNP/UDP phosphorylase family. In terms of assembly, homohexamer; trimer of homodimers.

The enzyme catalyses a purine D-ribonucleoside + phosphate = a purine nucleobase + alpha-D-ribose 1-phosphate. It carries out the reaction a purine 2'-deoxy-D-ribonucleoside + phosphate = a purine nucleobase + 2-deoxy-alpha-D-ribose 1-phosphate. Catalyzes the reversible phosphorolytic breakdown of the N-glycosidic bond in the beta-(deoxy)ribonucleoside molecules, with the formation of the corresponding free purine bases and pentose-1-phosphate. This chain is Purine nucleoside phosphorylase DeoD-type, found in Actinobacillus pleuropneumoniae serotype 5b (strain L20).